The primary structure comprises 111 residues: UPF0122 protein YofM (111 aa).

Belongs to the UPF0122 family.

Its function is as follows. Might take part in the signal recognition particle (SRP) pathway. This is inferred from the conservation of its genetic proximity to ftsY/ffh. May be a regulatory protein. The protein is UPF0122 protein YofM (yofM) of Lactococcus lactis subsp. lactis (strain IL1403) (Streptococcus lactis).